The sequence spans 330 residues: Methionyl-tRNA formyltransferase (330 aa).

Residue S121 to P124 coordinates (6S)-5,6,7,8-tetrahydrofolate.

It belongs to the Fmt family.

The catalysed reaction is L-methionyl-tRNA(fMet) + (6R)-10-formyltetrahydrofolate = N-formyl-L-methionyl-tRNA(fMet) + (6S)-5,6,7,8-tetrahydrofolate + H(+). In terms of biological role, attaches a formyl group to the free amino group of methionyl-tRNA(fMet). The formyl group appears to play a dual role in the initiator identity of N-formylmethionyl-tRNA by promoting its recognition by IF2 and preventing the misappropriation of this tRNA by the elongation apparatus. This Burkholderia cenocepacia (strain HI2424) protein is Methionyl-tRNA formyltransferase.